The sequence spans 177 residues: ATP synthase subunit b (177 aa).

A helical transmembrane segment spans residues 29–49 (FFFVLAIFLIVLAVIGTFVVP).

This sequence belongs to the ATPase B chain family. F-type ATPases have 2 components, F(1) - the catalytic core - and F(0) - the membrane proton channel. F(1) has five subunits: alpha(3), beta(3), gamma(1), delta(1), epsilon(1). F(0) has three main subunits: a(1), b(2) and c(10-14). The alpha and beta chains form an alternating ring which encloses part of the gamma chain. F(1) is attached to F(0) by a central stalk formed by the gamma and epsilon chains, while a peripheral stalk is formed by the delta and b chains.

The protein resides in the cell membrane. Functionally, f(1)F(0) ATP synthase produces ATP from ADP in the presence of a proton or sodium gradient. F-type ATPases consist of two structural domains, F(1) containing the extramembraneous catalytic core and F(0) containing the membrane proton channel, linked together by a central stalk and a peripheral stalk. During catalysis, ATP synthesis in the catalytic domain of F(1) is coupled via a rotary mechanism of the central stalk subunits to proton translocation. Its function is as follows. Component of the F(0) channel, it forms part of the peripheral stalk, linking F(1) to F(0). This is ATP synthase subunit b from Mycolicibacterium paratuberculosis (strain ATCC BAA-968 / K-10) (Mycobacterium paratuberculosis).